The chain runs to 353 residues: Polyprenal reductase 2 (353 aa).

The next 6 membrane-spanning stretches (helical) occupy residues 11–31, 78–98, 175–195, 234–254, 291–308, and 313–335; these read PLLCFAWIAATLPIIAAALPI, FMHFYVVGVLATTILLLAIWF, MHIVGYLTGLFYYVAAPLSLA, PLLKLGWTQWIGAVIFIWGSL, YLAELVIYFGMLVASGAE, and WFLFIFLITNLSFAAVETYNWYL.

This sequence belongs to the steroid 5-alpha reductase family. Polyprenal reductase subfamily.

It is found in the cell membrane. The enzyme catalyses a di-trans,poly-cis-dolichal + NADP(+) = a di-trans,poly-cis-polyprenal + NADPH + H(+). It participates in protein modification; protein glycosylation. Plays a key role in early steps of protein N-linked glycosylation by being involved in the conversion of polyprenol into dolichol. Acts as a polyprenal reductase that mediates the reduction of polyprenal into dolichal in a NADP-dependent mechanism. Dolichols are required for the synthesis of dolichol-linked monosaccharides and the oligosaccharide precursor used for N-glycosylation. The protein is Polyprenal reductase 2 of Oryza sativa subsp. indica (Rice).